We begin with the raw amino-acid sequence, 170 residues long: F107 fimbrial protein (170 aa).

Residues 1–21 (MKRLVFISFVALSMTAGSAMA) form the signal peptide. An intrachain disulfide couples cysteine 37 to cysteine 78.

Belongs to the fimbrial protein family.

The protein localises to the fimbrium. Its function is as follows. Fimbriae (also called pili), polar filaments radiating from the surface of the bacterium to a length of 0.5-1.5 micrometers and numbering 100-300 per cell, enable bacteria to colonize the epithelium of specific host organs. The protein is F107 fimbrial protein (fedA) of Escherichia coli.